A 327-amino-acid chain; its full sequence is Microtubule-associated protein RP/EB family member 2 (327 aa).

The interval 1-21 (MPGPTQTLSPNGENNNDIIQD) is disordered. An N-acetylalanine modification is found at P2. The residue at position 9 (S9) is a Phosphoserine. The Calponin-homology (CH) domain occupies 57–159 (TMSRHDIIAW…FIQWFKKFYD (103 aa)). Residue Y167 is modified to Phosphotyrosine. Disordered regions lie at residues 171 to 240 (EARQ…DKDL) and 299 to 327 (ASEE…QEEY). A DCTN1-binding region spans residues 187–327 (QIFNLPKKSH…EQQPPQQEEY (141 aa)). The span at 200 to 234 (SPTAGAAKSSPAAKPGSTPSRPSSAKRASSSGSAS) shows a compositional bias: low complexity. S219 and S236 each carry phosphoserine. The EB1 C-terminal domain occupies 236-306 (SDKDLETQVI…LYASEEHEGH (71 aa)). Residues 259 to 302 (EGVEKERDFYFGKLREIELLCQEHGQENDDLVQRLMDILYASEE) form an APC-binding region. Residues 300–317 (SEEHEGHTEEPEAEEQAH) are compositionally biased toward basic and acidic residues. Over residues 318–327 (EQQPPQQEEY) the composition is skewed to low complexity.

Belongs to the MAPRE family. In terms of assembly, interacts with DCTN1. Interacts with APC (via C-terminal). Interacts with monomeric and polymerized tubulin. Interacts with SLAIN1. Interacts (via the N-terminal region) with BAG1. Interacts with ASB14. Interacts with HAX1; this interaction is essential for epidermal cell migration. In terms of processing, phosphorylated at Ser-236 by CK2 leading to enhanced cell adhesion. Phosphorylated by CDK1 and AURKB during mitosis reduces the binding affinity of MAPRE2 for microtubules. Post-translationally, ubiquitinated in an ASB14-dependent manner; leading to proteasomal degradation. Expressed in different tumor cell lines. Up-regulated in activated B- and T-lymphocytes.

Its subcellular location is the cytoplasm. The protein localises to the cytoskeleton. Adapter protein that is involved in microtubule polymerization, and spindle function by stabilizing microtubules and anchoring them at centrosomes. Therefore, ensures mitotic progression and genome stability. Acts as a central regulator of microtubule reorganization in apico-basal epithelial differentiation. Plays a role during oocyte meiosis by regulating microtubule dynamics. Participates in neurite growth by interacting with plexin B3/PLXNB3 and microtubule reorganization during apico-basal epithelial differentiation. Also plays an essential role for cell migration and focal adhesion dynamics. Mechanistically, recruits HAX1 to microtubules in order to regulate focal adhesion dynamics. This Homo sapiens (Human) protein is Microtubule-associated protein RP/EB family member 2 (MAPRE2).